The primary structure comprises 128 residues: Large ribosomal subunit protein bL21 (128 aa).

The interval 104–128 (GKTPTVGPRPKKEKVVEPAEGEGDH) is disordered. The span at 116-128 (EKVVEPAEGEGDH) shows a compositional bias: basic and acidic residues.

Belongs to the bacterial ribosomal protein bL21 family. In terms of assembly, part of the 50S ribosomal subunit. Contacts protein L20.

In terms of biological role, this protein binds to 23S rRNA in the presence of protein L20. The protein is Large ribosomal subunit protein bL21 of Nitrobacter hamburgensis (strain DSM 10229 / NCIMB 13809 / X14).